Reading from the N-terminus, the 154-residue chain is Jupiter microtubule associated homolog 1 (154 aa).

Met-1 bears the N-acetylmethionine mark. The span at 1–19 (MTTTTTFKGVDPNSRNSSR) shows a compositional bias: polar residues. A disordered region spans residues 1 to 154 (MTTTTTFKGV…PGGKSSLVLG (154 aa)). N-acetylthreonine; in Hematological and neurological expressed 1 protein, N-terminally processed is present on Thr-2. Residues Ser-28 and Ser-31 each carry the phosphoserine modification. Phosphothreonine is present on Thr-54. A phosphoserine mark is found at Ser-71, Ser-80, Ser-87, Ser-88, and Ser-92. The span at 80–91 (SGPQRRNSSEAN) shows a compositional bias: polar residues. The segment covering 96 to 108 (LDLKGEGDVHENV) has biased composition (basic and acidic residues). A compositionally biased stretch (pro residues) spans 125–138 (PAAPVPSPVAPAPV). Ser-131 bears the Phosphoserine mark. At Lys-148 the chain carries N6-acetyllysine.

Belongs to the JUPITER family. In terms of assembly, interacts with the complex composed, at least, of APC, CTNNB1 and GSK3B; the interaction takes place with the inactive form of GSK3B (phosphorylated at 'Ser-9').

The protein resides in the nucleus. Its subcellular location is the cytoplasm. Modulates negatively AKT-mediated GSK3B signaling. Induces CTNNB1 'Ser-33' phosphorylation and degradation through the suppression of the inhibitory 'Ser-9' phosphorylation of GSK3B, which represses the function of the APC:CTNNB1:GSK3B complex and the interaction with CDH1/E-cadherin in adherent junctions. Plays a role in the regulation of cell cycle and cell adhesion. Has an inhibitory role on AR-signaling pathway through the induction of receptor proteasomal degradation. This chain is Jupiter microtubule associated homolog 1, found in Bos taurus (Bovine).